Here is a 295-residue protein sequence, read N- to C-terminus: Nucleotide-binding protein LSEI_0959 (295 aa).

12–19 (GMSGAGKT) is a binding site for ATP. 62–65 (DLRS) provides a ligand contact to GTP.

Belongs to the RapZ-like family.

Displays ATPase and GTPase activities. This is Nucleotide-binding protein LSEI_0959 from Lacticaseibacillus paracasei (strain ATCC 334 / BCRC 17002 / CCUG 31169 / CIP 107868 / KCTC 3260 / NRRL B-441) (Lactobacillus paracasei).